The primary structure comprises 181 residues: 6,7-dimethyl-8-ribityllumazine synthase (181 aa).

5-amino-6-(D-ribitylamino)uracil contacts are provided by residues Tyr-27, 58–60 (ALE), and 87–89 (CVI). 92–93 (ET) contributes to the (2S)-2-hydroxy-3-oxobutyl phosphate binding site. The Proton donor role is filled by His-95. 5-amino-6-(D-ribitylamino)uracil is bound at residue Asn-120. Position 134 (Arg-134) interacts with (2S)-2-hydroxy-3-oxobutyl phosphate.

This sequence belongs to the DMRL synthase family.

The enzyme catalyses (2S)-2-hydroxy-3-oxobutyl phosphate + 5-amino-6-(D-ribitylamino)uracil = 6,7-dimethyl-8-(1-D-ribityl)lumazine + phosphate + 2 H2O + H(+). Its pathway is cofactor biosynthesis; riboflavin biosynthesis; riboflavin from 2-hydroxy-3-oxobutyl phosphate and 5-amino-6-(D-ribitylamino)uracil: step 1/2. Its function is as follows. Catalyzes the formation of 6,7-dimethyl-8-ribityllumazine by condensation of 5-amino-6-(D-ribitylamino)uracil with 3,4-dihydroxy-2-butanone 4-phosphate. This is the penultimate step in the biosynthesis of riboflavin. The polypeptide is 6,7-dimethyl-8-ribityllumazine synthase (Methylobacterium nodulans (strain LMG 21967 / CNCM I-2342 / ORS 2060)).